Reading from the N-terminus, the 351-residue chain is tRNA-specific 2-thiouridylase MnmA 2 (351 aa).

ATP is bound by residues 13–20 (GMSGGTDS) and Phe39. The active-site Nucleophile is Cys98. Cys98 and Cys195 are oxidised to a cystine. Gly122 contributes to the ATP binding site. Residues 144 to 146 (KDQ) form an interaction with tRNA region. The Cysteine persulfide intermediate role is filled by Cys195. Residues 301–302 (RY) form an interaction with tRNA region.

This sequence belongs to the MnmA/TRMU family.

The protein localises to the cytoplasm. The enzyme catalyses S-sulfanyl-L-cysteinyl-[protein] + uridine(34) in tRNA + AH2 + ATP = 2-thiouridine(34) in tRNA + L-cysteinyl-[protein] + A + AMP + diphosphate + H(+). Its function is as follows. Catalyzes the 2-thiolation of uridine at the wobble position (U34) of tRNA, leading to the formation of s(2)U34. The chain is tRNA-specific 2-thiouridylase MnmA 2 from Phocaeicola vulgatus (strain ATCC 8482 / DSM 1447 / JCM 5826 / CCUG 4940 / NBRC 14291 / NCTC 11154) (Bacteroides vulgatus).